Here is a 262-residue protein sequence, read N- to C-terminus: Zinc-finger homeodomain protein 6 (262 aa).

2 stretches are compositionally biased toward basic and acidic residues: residues 1 to 25 and 36 to 47; these read MEVREKKDEKMEMTRRKSSALDHHR and NKEKPTTKRNGS. Residues 1 to 93 form a disordered region; it reads MEVREKKDEK…ECQKNHAASS (93 aa). A ZF-HD dimerization-type; degenerate zinc finger spans residues 82–131; the sequence is YRECQKNHAASSGGHVVDGCGEFMSSGEEGTVESLLCAACDCHRSFHRKE. Positions 198–261 form a DNA-binding region, homeobox; the sequence is KKRFRTKFNE…NNKQAAKKKD (64 aa).

As to quaternary structure, homo- and heterodimer with other ZFHD proteins. Interacts with MIF1 and MIF3; these interactions prevent nuclear localization and DNA-binding to inhibit transcription regulation activity. Binds to ZHD1, ZHD2, ZHD10 and ZHD11. In terms of tissue distribution, expressed in seedlings, roots, leaves, stems, flowers and inflorescence.

Its subcellular location is the nucleus. Its function is as follows. Putative transcription factor. This Arabidopsis thaliana (Mouse-ear cress) protein is Zinc-finger homeodomain protein 6 (ZHD6).